The primary structure comprises 593 residues: Calnexin (593 aa).

The N-terminal stretch at 1-20 (MEGKWLLCMLLVLGTTIVQA) is a signal peptide. Residues 21 to 482 (HEGHDDDMID…QMIEAAEERP (462 aa)) are Lumenal-facing. Residues Ser-75 and Asp-118 each coordinate Ca(2+). Lys-138 is subject to N6-acetyllysine. A disulfide bridge links Cys-161 with Cys-195. Positions 165, 167, 186, and 193 each coordinate an alpha-D-glucoside. The tract at residues 261–346 (GNLLNDMTPP…AEKPEDWDED (86 aa)) is disordered. Positions 277–410 (IEDPEDQKPE…RKIPNPDFFE (134 aa)) are p domain (Extended arm). A run of 5 repeats spans residues 279 to 290 (DPEDQKPEDWDE), 296 to 307 (DPDAVKPDDWNE), 315 to 326 (DEEATKPDGWLD), 334 to 345 (DPDAEKPEDWDE), and 349 to 359 (GEWEAPQIANP). 4 X approximate repeats stretches follow at residues 279 to 345 (DPED…DWDE) and 349 to 406 (GEWE…IPNP). Over residues 282–320 (DQKPEDWDERPKIPDPDAVKPDDWNEDAPAKIPDEEATK) the composition is skewed to basic and acidic residues. Over residues 324–346 (WLDDEPEYVPDPDAEKPEDWDED) the composition is skewed to acidic residues. Positions 327 to 360 (DEPEYVPDPDAEKPEDWDEDMDGEWEAPQIANPK) are interaction with PPIB. Cys-361 and Cys-367 are joined by a disulfide. 3 consecutive repeat copies span residues 368 to 378 (GVWQRPMIDNP), 382 to 392 (GKWKPPMIDNP), and 396 to 406 (GIWKPRKIPNP). Glu-426 lines the an alpha-D-glucoside pocket. Asp-437 contacts Ca(2+). Residues 483–503 (WLWVVYVLTVALPVFLVILFC) traverse the membrane as a helical segment. Residues Cys-503 and Cys-504 are each lipidated (S-palmitoyl cysteine). The Cytoplasmic segment spans residues 504 to 593 (CSGKKQSSPV…SPRNRKPRRE (90 aa)). The segment at 504–593 (CSGKKQSSPV…SPRNRKPRRE (90 aa)) is sufficient to mediate interaction with SGIP1. The segment at 511-593 (SPVEYKKTDA…SPRNRKPRRE (83 aa)) is disordered. Positions 526 to 548 (KEEEEEKEEEKDKGDEEEEGEEK) are enriched in acidic residues. Position 555 is a phosphoserine (Ser-555). Thr-563 bears the Phosphothreonine mark. Ser-565 is modified (phosphoserine; by MAPK3). At Ser-584 the chain carries Phosphoserine.

This sequence belongs to the calreticulin family. As to quaternary structure, interacts with MAPK3/ERK1. Interacts with KCNH2. Associates with ribosomes. Interacts with SGIP1; involved in negative regulation of endocytosis. The palmitoylated form interacts with the ribosome-translocon complex component SSR1, promoting efficient folding of glycoproteins. Interacts with SERPINA2P/SERPINA2 and with the S and Z variants of SERPINA1. Interacts with PPIB. Interacts with ZNRF4. Interacts with SMIM22. Interacts with TMX2. Interacts with TMEM35A/NACHO and CHRNA7. Interacts with reticulophagy regulators RETREG2 and RETREG3. Interacts with DNM1L; may form part of a larger protein complex at the ER-mitochondrial interface during mitochondrial fission. Interacts with ADAM7. In terms of processing, phosphorylated at Ser-565 by MAPK3/ERK1. Phosphorylation by MAPK3/ERK1 increases its association with ribosomes. Post-translationally, palmitoylation by DHHC6 leads to the preferential localization to the perinuclear rough ER. It mediates the association of calnexin with the ribosome-translocon complex (RTC) which is required for efficient folding of glycosylated proteins. Ubiquitinated, leading to proteasomal degradation. Probably ubiquitinated by ZNRF4.

Its subcellular location is the endoplasmic reticulum membrane. The protein localises to the mitochondrion membrane. It is found in the melanosome membrane. Its function is as follows. Calcium-binding protein that interacts with newly synthesized monoglucosylated glycoproteins in the endoplasmic reticulum. It may act in assisting protein assembly and/or in the retention within the ER of unassembled protein subunits. It seems to play a major role in the quality control apparatus of the ER by the retention of incorrectly folded proteins. Associated with partial T-cell antigen receptor complexes that escape the ER of immature thymocytes, it may function as a signaling complex regulating thymocyte maturation. Additionally it may play a role in receptor-mediated endocytosis at the synapse. The protein is Calnexin (CANX) of Canis lupus familiaris (Dog).